The primary structure comprises 2273 residues: Acetyl-CoA carboxylase, mitochondrial (2273 aa).

A mitochondrion-targeting transit peptide spans 1-104; it reads KGKTITHGQS…RGNIHKHTRL (104 aa). Residues 134-635 form the Biotin carboxylation domain; sequence VISKILIANN…STGWLDDLIL (502 aa). The ATP-grasp domain occupies 292–484; that stretch reads KTNFVSVPDD…LPATQLQIAM (193 aa). Residue 332–337 coordinates ATP; sequence GGGGKG. The active site involves Arg459. Residues 763–837 form the Biotinyl-binding domain; sequence LEAELNPTQV…EAGDVIAKLT (75 aa). An N6-biotinyllysine modification is found at Lys804. In terms of domain architecture, CoA carboxyltransferase N-terminal spans 1532–1867; sequence PYSVKDWLQP…KRDMSPPLLE (336 aa). The carboxyltransferase stretch occupies residues 1532–2187; the sequence is PYSVKDWLQP…EGQVIKRLQK (656 aa). 3 residues coordinate CoA: Arg1776, Lys2080, and Arg2082. Residues 1871-2187 form the CoA carboxyltransferase C-terminal domain; the sequence is RWDRDVDFKP…EGQVIKRLQK (317 aa).

The cofactor is biotin.

The protein localises to the mitochondrion. It carries out the reaction hydrogencarbonate + acetyl-CoA + ATP = malonyl-CoA + ADP + phosphate + H(+). The enzyme catalyses N(6)-biotinyl-L-lysyl-[protein] + hydrogencarbonate + ATP = N(6)-carboxybiotinyl-L-lysyl-[protein] + ADP + phosphate + H(+). It participates in lipid metabolism; malonyl-CoA biosynthesis; malonyl-CoA from acetyl-CoA: step 1/1. Catalyzes the rate-limiting reaction in the mitochondrial fatty acid synthesis (FAS) type II pathway. Responsible for the production of the mitochondrial malonyl-CoA, used for the biosynthesis of the cofactor lipoic acid. This protein carries three functions: biotin carboxyl carrier protein, biotin carboxylase, and carboxyltransferase. In Saccharomyces cerevisiae (strain JAY291) (Baker's yeast), this protein is Acetyl-CoA carboxylase, mitochondrial (HFA1).